The following is a 568-amino-acid chain: Urease subunit beta (568 aa).

The Urease domain maps to 131 to 568; it reads GGIDTHIHFI…LSLAQLYNLF (438 aa). Positions 136, 138, and 219 each coordinate Ni(2+). Lys-219 bears the N6-carboxylysine mark. Residue His-221 coordinates substrate. Positions 248 and 274 each coordinate Ni(2+). His-321 serves as the catalytic Proton donor. A Ni(2+)-binding site is contributed by Asp-361.

The protein belongs to the metallo-dependent hydrolases superfamily. Urease alpha subunit family. As to quaternary structure, heterohexamer of 3 UreA (alpha) and 3 UreB (beta) subunits. Ni cation serves as cofactor. Post-translationally, carboxylation allows a single lysine to coordinate two nickel ions.

The protein localises to the cytoplasm. The enzyme catalyses urea + 2 H2O + H(+) = hydrogencarbonate + 2 NH4(+). Its pathway is nitrogen metabolism; urea degradation; CO(2) and NH(3) from urea (urease route): step 1/1. The sequence is that of Urease subunit beta from Helicobacter heilmannii.